The chain runs to 641 residues: MEGTCFLRGQPLTTIPSLPSRKGFLLQRWKTNRIVRFSGFKNHSVSGKSRSFDLSLRASGPIRASSVVTEASPTNLNSKEEDLVFVAGATGKVGSRTVRELLKLGFRVRAGVRSAQRAGSLVQSVKEMKLQNTDEGTQPVEKLEIVECDLEKKDSIQPALGNASVIICCIGASEKEISDITGPYRIDYLATKNLVDAATSAKVNNFILVTSLGTNKFGFPAAILNLFWGVLCWKRKAEEALIESGLNYAIVRPGGMERPTDAYKETHNLTLALDDTLFGGQVSNLQVAELLACMAKNPQLSFSKIVEVVAETTAPLTPIEKLLEKIPSKRPYVPPPKASVATKEVKPVPTKPVTQEPTAPKEDEAPPKEKNVKPRPLSPYASYEDLKPPTSPIPNSTTSVSPAKSKEVDATQVPVEANVVPVPDSTSNVPVVEVKQVEEKKERPLSPYARYENLKPPSSPSPTASSTRKSDSLSPGPTDSDTDKSSTVAKTVTETAVATSVTETSVATSVPETAVATSVTETAAPATSKMRPLSPYAIYADLKPPTSPTPASTGPKEAASVEDNSELPGGNNDVLKTVDGNLNTIPPSTPEAVPVVSSAIDTSLASGDNTAQPKPRPLSPYTMYADMKPPTSPLPSPVTNH.

A chloroplast-targeting transit peptide spans 1-63 (MEGTCFLRGQ…LSLRASGPIR (63 aa)). Position 64 is an N-acetylalanine (A64). 84 to 113 (VFVAGATGKVGSRTVRELLKLGFRVRAGVR) is an NADP(+) binding site. A disordered region spans residues 328 to 641 (SKRPYVPPPK…SPLPSPVTNH (314 aa)). The segment covering 359 to 372 (APKEDEAPPKEKNV) has biased composition (basic and acidic residues). Repeat copies occupy residues 376 to 397 (PLSPYASYEDLKPPTSPIPNST) and 444 to 465 (PLSPYARYENLKPPSSPSPTAS). The interval 376–638 (PLSPYASYED…PPTSPLPSPV (263 aa)) is 4 X 22 AA approximate repeats. Positions 393-402 (IPNSTTSVSP) are enriched in low complexity. Residues 435 to 444 (KQVEEKKERP) show a composition bias toward basic and acidic residues. The segment covering 485 to 528 (SSTVAKTVTETAVATSVTETSVATSVPETAVATSVTETAAPATS) has biased composition (low complexity). The stretch at 532–553 (PLSPYAIYADLKPPTSPTPAST) is repeat 3. Positions 599–612 (AIDTSLASGDNTAQ) are enriched in polar residues. The stretch at 617–638 (PLSPYTMYADMKPPTSPLPSPV) is repeat 4. Residues 630–641 (PTSPLPSPVTNH) show a composition bias toward pro residues.

Part of the Tic complex. Interacts with TIC110 and TIC55. Interacts with LFNR1 and LFNR2. Component of high molecular weight thylakoid LFNRs-containing protein complexes containing LIR1, LFNR1, LFNR2, TIC62 and TROL proteins. As to expression, expressed in cotyledons and leaves, but not in roots.

The protein localises to the plastid. It localises to the chloroplast inner membrane. The protein resides in the chloroplast stroma. Its subcellular location is the chloroplast thylakoid. In terms of biological role, involved in protein precursor import into chloroplasts. Part of the redox regulon consisting of TIC32, TIC 55 and TIC62. Acts as a membrane anchor of LFNR1 and LFNR2. Has a NADPH-dependent dehydrogenase activity, but only after preincubation with lipids. This Arabidopsis thaliana (Mouse-ear cress) protein is Protein TIC 62, chloroplastic.